The following is a 551-amino-acid chain: Formate--tetrahydrofolate ligase (551 aa).

54 to 61 (TPPGEGKT) is a binding site for ATP.

This sequence belongs to the formate--tetrahydrofolate ligase family.

The catalysed reaction is (6S)-5,6,7,8-tetrahydrofolate + formate + ATP = (6R)-10-formyltetrahydrofolate + ADP + phosphate. Its pathway is one-carbon metabolism; tetrahydrofolate interconversion. This Myxococcus xanthus (strain DK1622) protein is Formate--tetrahydrofolate ligase.